The primary structure comprises 733 residues: Zinc finger transcription factor ace1 (733 aa).

Over residues 1–11 (MSFSNPRRRTP) the composition is skewed to basic residues. Disordered stretches follow at residues 1-22 (MSFSNPRRRTPVTRPGTDCEHG), 34-63 (GATFHSPTSPSASSAAGDFVPPTLTRSQSA), and 89-183 (ASLS…SSTT). Residues 39–49 (SPTSPSASSAA) show a composition bias toward low complexity. Over residues 132 to 142 (LRPRSVRRTRN) the composition is skewed to basic residues. Residues 148–158 (GIGSSVVSTND) are compositionally biased toward polar residues. The segment covering 171–183 (ASALTRSAASSTT) has biased composition (low complexity). C2H2-type zinc fingers lie at residues 400 to 424 (KKCREPGCTKEFKRPCDLTKHEKTH), 428 to 456 (WKCPIPTCKYHEYGWPTEKEMDRHINDKH), and 463 to 488 (YECLFKPCPYKSKRESNCKQHMEKAH). Residues 497 to 533 (TNGKKAPSQNGSTAQQTPPLANVSTPSSTPSYSVPTP) form a disordered region. The span at 503 to 515 (PSQNGSTAQQTPP) shows a compositional bias: polar residues. Low complexity predominate over residues 519–530 (VSTPSSTPSYSV).

The protein localises to the nucleus. In terms of biological role, binds to the promoter of the cbh1 gene and activates transcription. In Hypocrea jecorina (Trichoderma reesei), this protein is Zinc finger transcription factor ace1 (ace1).